A 74-amino-acid chain; its full sequence is Small ribosomal subunit protein uS8c (74 aa).

It belongs to the universal ribosomal protein uS8 family. As to quaternary structure, part of the 30S ribosomal subunit.

Its subcellular location is the plastid. The protein resides in the chloroplast. Functionally, one of the primary rRNA binding proteins, it binds directly to 16S rRNA central domain where it helps coordinate assembly of the platform of the 30S subunit. The protein is Small ribosomal subunit protein uS8c (rps8) of Oenothera ammophila (Evening primerose).